The sequence spans 181 residues: Oligoribonuclease (181 aa).

Residues 8 to 171 (LVWLDMEMTG…ADIYESIDEL (164 aa)) form the Exonuclease domain. The active site involves Tyr-129.

This sequence belongs to the oligoribonuclease family.

The protein resides in the cytoplasm. Functionally, 3'-to-5' exoribonuclease specific for small oligoribonucleotides. This Bordetella bronchiseptica (strain ATCC BAA-588 / NCTC 13252 / RB50) (Alcaligenes bronchisepticus) protein is Oligoribonuclease.